The chain runs to 639 residues: 1-deoxy-D-xylulose-5-phosphate synthase (639 aa).

Thiamine diphosphate-binding positions include His-79 and 120–122 (GHS). Mg(2+) is bound at residue Asp-151. Thiamine diphosphate contacts are provided by residues 152 to 153 (GS), Asn-180, Tyr-289, and Glu-371. Asn-180 is a binding site for Mg(2+).

This sequence belongs to the transketolase family. DXPS subfamily. Homodimer. Mg(2+) is required as a cofactor. Requires thiamine diphosphate as cofactor.

The catalysed reaction is D-glyceraldehyde 3-phosphate + pyruvate + H(+) = 1-deoxy-D-xylulose 5-phosphate + CO2. The protein operates within metabolic intermediate biosynthesis; 1-deoxy-D-xylulose 5-phosphate biosynthesis; 1-deoxy-D-xylulose 5-phosphate from D-glyceraldehyde 3-phosphate and pyruvate: step 1/1. Functionally, catalyzes the acyloin condensation reaction between C atoms 2 and 3 of pyruvate and glyceraldehyde 3-phosphate to yield 1-deoxy-D-xylulose-5-phosphate (DXP). The polypeptide is 1-deoxy-D-xylulose-5-phosphate synthase (Agrobacterium fabrum (strain C58 / ATCC 33970) (Agrobacterium tumefaciens (strain C58))).